Reading from the N-terminus, the 94-residue chain is uncharacterized protein (94 aa).

In terms of biological role, could be a silencing control element for the regulation of the restriction system. This is an uncharacterized protein from Herpetosiphon aurantiacus (Herpetosiphon giganteus).